The sequence spans 283 residues: Bifunctional protein FolD (283 aa).

Residues 164–166, isoleucine 189, and isoleucine 230 contribute to the NADP(+) site; that span reads GSS.

This sequence belongs to the tetrahydrofolate dehydrogenase/cyclohydrolase family. As to quaternary structure, homodimer.

The enzyme catalyses (6R)-5,10-methylene-5,6,7,8-tetrahydrofolate + NADP(+) = (6R)-5,10-methenyltetrahydrofolate + NADPH. It catalyses the reaction (6R)-5,10-methenyltetrahydrofolate + H2O = (6R)-10-formyltetrahydrofolate + H(+). Its pathway is one-carbon metabolism; tetrahydrofolate interconversion. In terms of biological role, catalyzes the oxidation of 5,10-methylenetetrahydrofolate to 5,10-methenyltetrahydrofolate and then the hydrolysis of 5,10-methenyltetrahydrofolate to 10-formyltetrahydrofolate. The polypeptide is Bifunctional protein FolD (Fusobacterium nucleatum subsp. nucleatum (strain ATCC 25586 / DSM 15643 / BCRC 10681 / CIP 101130 / JCM 8532 / KCTC 2640 / LMG 13131 / VPI 4355)).